The primary structure comprises 466 residues: Soluble pyridine nucleotide transhydrogenase (466 aa).

36–45 serves as a coordination point for FAD; sequence ERYQNVGGGC.

This sequence belongs to the class-I pyridine nucleotide-disulfide oxidoreductase family. It depends on FAD as a cofactor.

It is found in the cytoplasm. It catalyses the reaction NAD(+) + NADPH = NADH + NADP(+). Conversion of NADPH, generated by peripheral catabolic pathways, to NADH, which can enter the respiratory chain for energy generation. This is Soluble pyridine nucleotide transhydrogenase from Escherichia fergusonii (strain ATCC 35469 / DSM 13698 / CCUG 18766 / IAM 14443 / JCM 21226 / LMG 7866 / NBRC 102419 / NCTC 12128 / CDC 0568-73).